Consider the following 203-residue polypeptide: Urease accessory protein UreG (203 aa).

A GTP-binding site is contributed by Gly14–Thr21.

Belongs to the SIMIBI class G3E GTPase family. UreG subfamily. Homodimer. UreD, UreF and UreG form a complex that acts as a GTP-hydrolysis-dependent molecular chaperone, activating the urease apoprotein by helping to assemble the nickel containing metallocenter of UreC. The UreE protein probably delivers the nickel.

It is found in the cytoplasm. Facilitates the functional incorporation of the urease nickel metallocenter. This process requires GTP hydrolysis, probably effectuated by UreG. The sequence is that of Urease accessory protein UreG from Rhizobium rhizogenes (strain K84 / ATCC BAA-868) (Agrobacterium radiobacter).